The following is a 194-amino-acid chain: Peptidyl-tRNA hydrolase (194 aa).

Tyr-17 lines the tRNA pocket. His-22 serves as the catalytic Proton acceptor. Positions 68, 70, and 116 each coordinate tRNA.

This sequence belongs to the PTH family. As to quaternary structure, monomer.

The protein localises to the cytoplasm. The catalysed reaction is an N-acyl-L-alpha-aminoacyl-tRNA + H2O = an N-acyl-L-amino acid + a tRNA + H(+). Hydrolyzes ribosome-free peptidyl-tRNAs (with 1 or more amino acids incorporated), which drop off the ribosome during protein synthesis, or as a result of ribosome stalling. Functionally, catalyzes the release of premature peptidyl moieties from peptidyl-tRNA molecules trapped in stalled 50S ribosomal subunits, and thus maintains levels of free tRNAs and 50S ribosomes. This is Peptidyl-tRNA hydrolase from Pseudomonas aeruginosa (strain LESB58).